A 431-amino-acid chain; its full sequence is MELGSSDVTSSGLDHAGLNSLGLPKPPALTRVVVAMSGGVDSSVVAALLKREGYEVIGVTLQLYDHGEAVHRKGACCAGQDIQDARQVADQLGIPHYVLDYEERFRRKVIDPFAQSYATGETPIPCVSCNSEIKFADLFETAQHLGADVLATGHYVSSKAEADGGRALYRSLDSSRDQSYFLFATTNAQLELLRFPLGDLAKPDVRQMARQLGLVVADKADSQDICFVPSGKYSDVIERLSPGAVVPGEILHVDGRVLGRHSGVIHYTIGQRRGLGLGAVGAGAGEPLYVIRLDAAKAQVIVGPRQALATRRVHLRGVNWIGPGSLQDMDEHGLEIFVQVRSTRAPIPGFLHAHESEIWVDFALDEDGVSPGQACVFYENDQPRARVLGGGFISATESALQMREMFPKPPNEDLLDTNESSDLVSPKRSAC.

ATP contacts are provided by residues 35-42 (AMSGGVDS) and L61. The Nucleophile role is filled by C129. Residues C129 and C226 are joined by a disulfide bond. G153 contributes to the ATP binding site. Positions 176 to 178 (RDQ) are interaction with tRNA. C226 (cysteine persulfide intermediate) is an active-site residue. The interval 407–431 (PKPPNEDLLDTNESSDLVSPKRSAC) is disordered.

It belongs to the MnmA/TRMU family.

It is found in the cytoplasm. It catalyses the reaction S-sulfanyl-L-cysteinyl-[protein] + uridine(34) in tRNA + AH2 + ATP = 2-thiouridine(34) in tRNA + L-cysteinyl-[protein] + A + AMP + diphosphate + H(+). Catalyzes the 2-thiolation of uridine at the wobble position (U34) of tRNA, leading to the formation of s(2)U34. The polypeptide is tRNA-specific 2-thiouridylase MnmA (Beijerinckia indica subsp. indica (strain ATCC 9039 / DSM 1715 / NCIMB 8712)).